Here is a 300-residue protein sequence, read N- to C-terminus: Porphobilinogen deaminase (300 aa).

Cys239 bears the S-(dipyrrolylmethanemethyl)cysteine mark.

It belongs to the HMBS family. As to quaternary structure, monomer. Dipyrromethane is required as a cofactor.

The catalysed reaction is 4 porphobilinogen + H2O = hydroxymethylbilane + 4 NH4(+). The protein operates within porphyrin-containing compound metabolism; protoporphyrin-IX biosynthesis; coproporphyrinogen-III from 5-aminolevulinate: step 2/4. Functionally, tetrapolymerization of the monopyrrole PBG into the hydroxymethylbilane pre-uroporphyrinogen in several discrete steps. This chain is Porphobilinogen deaminase, found in Francisella tularensis subsp. tularensis (strain WY96-3418).